Consider the following 355-residue polypeptide: Double-stranded RNA-binding protein 4 (355 aa).

DRBM domains lie at 4–73 and 82–150; these read VYKG…SLTP and AYKN…SIKN. A compositionally biased stretch (polar residues) spans 149–188; the sequence is KNGNSNQTGSPTLPSERQEDVNSNVKSSPQEIHSQPSSKV. The interval 149 to 193 is disordered; sequence KNGNSNQTGSPTLPSERQEDVNSNVKSSPQEIHSQPSSKVVMTPD.

As to quaternary structure, heterodimer with DRB1 or DRB5. Interacts with DCL4 and cauliflower mosaic virus (CaMV) transactivator/viroplasmin protein. Interaction with CaMV transactivator/viroplasmin protein inhibits RNA silencing ability of DRB4. In terms of tissue distribution, expressed in roots, leaf vasculature, shoot apical meristem (SAM) and developing anthers.

The protein resides in the nucleus. Its function is as follows. Double-stranded RNA-binding protein involved in RNA-mediated post-transcriptional gene silencing (PTGS). Functions in the trans-acting small interfering RNAs (ta-siRNAs) biogenesis by binding and assisting DICER-LIKE 4 (DCL4). Required for DCL4 activity. Required for the 21 nucleotide ta-siRNAs production of the TAS3 transcript in leaves but not in flowers. Plays an important role in silencing RNA of both DNA and RNA viruses. Involved with argonaute 7 (AGO7) and RDR6 in turnip crinkle virus (TCV) silencing. May not be directly involved in viral siRNA production. May stabilize the 21 nucleotide viral siRNAs and deliver them to the RISC complex. Targeted by the viral silencing suppressor (VSR) transactivator/viroplasmin (TAV) protein of the cauliflower mosaic virus (CaMV) that inactivates DRB4 function in RNA silencing. Probably not involved in the guide strand selection from RNA duplexes. Involved in leaf morphology through its function in ta-siRNA-mediated silencing. The protein is Double-stranded RNA-binding protein 4 (DBR4) of Arabidopsis thaliana (Mouse-ear cress).